A 148-amino-acid chain; its full sequence is 3-dehydroquinate dehydratase (148 aa).

Tyr-23 functions as the Proton acceptor in the catalytic mechanism. Asn-75, His-81, and Asp-88 together coordinate substrate. His-101 acts as the Proton donor in catalysis. Residues 102–103 (LS) and Arg-112 contribute to the substrate site.

The protein belongs to the type-II 3-dehydroquinase family. Homododecamer.

The catalysed reaction is 3-dehydroquinate = 3-dehydroshikimate + H2O. It participates in metabolic intermediate biosynthesis; chorismate biosynthesis; chorismate from D-erythrose 4-phosphate and phosphoenolpyruvate: step 3/7. Catalyzes a trans-dehydration via an enolate intermediate. The polypeptide is 3-dehydroquinate dehydratase (Xanthomonas axonopodis pv. citri (strain 306)).